The primary structure comprises 336 residues: Protein DIA1 (336 aa).

It localises to the cytoplasm. Involved in regulation of invasive growth. The protein is Protein DIA1 (DIA1) of Saccharomyces cerevisiae (strain ATCC 204508 / S288c) (Baker's yeast).